The following is a 361-amino-acid chain: Molybdenum import ATP-binding protein ModC (361 aa).

An ABC transporter domain is found at 1–228; the sequence is MLNINIEKQF…EQMRPWVPLQ (228 aa). 31 to 38 provides a ligand contact to ATP; it reads GRSGAGKT. The region spanning 289 to 356 is the Mop domain; sequence GSSIRNLLRG…IKGVTMTQMD (68 aa).

It belongs to the ABC transporter superfamily. Molybdate importer (TC 3.A.1.8) family. The complex is composed of two ATP-binding proteins (ModC), two transmembrane proteins (ModB) and a solute-binding protein (ModA).

It is found in the cell inner membrane. It carries out the reaction molybdate(out) + ATP + H2O = molybdate(in) + ADP + phosphate + H(+). Part of the ABC transporter complex ModABC involved in molybdenum import. Responsible for energy coupling to the transport system. The polypeptide is Molybdenum import ATP-binding protein ModC (Shewanella sp. (strain MR-4)).